A 439-amino-acid polypeptide reads, in one-letter code: Large ribosomal subunit protein mL65 (439 aa).

Belongs to the mitochondrion-specific ribosomal protein mL65 family. As to quaternary structure, component of the mitochondrial large ribosomal subunit (mt-LSU). Mature mammalian 55S mitochondrial ribosomes consist of a small (28S) and a large (39S) subunit. The 28S small subunit contains a 12S ribosomal RNA (12S mt-rRNA) and 30 different proteins. The 39S large subunit contains a 16S rRNA (16S mt-rRNA), a copy of mitochondrial valine transfer RNA (mt-tRNA(Val)), which plays an integral structural role, and 52 different proteins. mL65 forms a heterodimer with mL37. As to expression, heart, skeletal muscle, kidney and liver. Lower expression in placenta and peripheral blood leukocytes.

Its subcellular location is the mitochondrion. The sequence is that of Large ribosomal subunit protein mL65 (MRPS30) from Homo sapiens (Human).